We begin with the raw amino-acid sequence, 221 residues long: Probable septum site-determining protein MinC (221 aa).

Belongs to the MinC family. Interacts with MinD and FtsZ.

Functionally, cell division inhibitor that blocks the formation of polar Z ring septums. Rapidly oscillates between the poles of the cell to destabilize FtsZ filaments that have formed before they mature into polar Z rings. Prevents FtsZ polymerization. The polypeptide is Probable septum site-determining protein MinC (Aliivibrio salmonicida (strain LFI1238) (Vibrio salmonicida (strain LFI1238))).